Here is a 407-residue protein sequence, read N- to C-terminus: Glucan 1,3-beta-glucosidase 1 (407 aa).

The signal sequence occupies residues 1-22 (MLSFTSVFSFFLHALLLKTAFS). Glu213 acts as the Proton donor in catalysis. Cys295 and Cys406 are oxidised to a cystine. The Nucleophile role is filled by Glu312.

Belongs to the glycosyl hydrolase 5 (cellulase A) family.

It is found in the secreted. It carries out the reaction Successive hydrolysis of beta-D-glucose units from the non-reducing ends of (1-&gt;3)-beta-D-glucans, releasing alpha-glucose.. In terms of biological role, beta-glucanases participate in the metabolism of beta-glucan, the main structural component of the cell wall. It could also function biosynthetically as a transglycosylase. The polypeptide is Glucan 1,3-beta-glucosidase 1 (exg1) (Schizosaccharomyces pombe (strain 972 / ATCC 24843) (Fission yeast)).